A 166-amino-acid chain; its full sequence is Photosystem I assembly protein Ycf3 (166 aa).

3 TPR repeats span residues 35-68, 72-105, and 120-153; these read AFTYYRNGMSAQSEGEYAEALQNYYQALRYEIDA, SYMLYNIGLIHSSNGQQSKALEYYYQALDRNPRL, and GEQALINNQDEISKIFFDKAADYWKEAIRLSPTS.

This sequence belongs to the Ycf3 family.

It is found in the plastid. It localises to the chloroplast thylakoid membrane. Essential for the assembly of the photosystem I (PSI) complex. May act as a chaperone-like factor to guide the assembly of the PSI subunits. In Bigelowiella natans (Pedinomonas minutissima), this protein is Photosystem I assembly protein Ycf3.